The chain runs to 334 residues: Glyceraldehyde-3-phosphate dehydrogenase (334 aa).

NAD(+) is bound by residues R12–I13, D34, and R79. D-glyceraldehyde 3-phosphate-binding positions include S150–T152, T181, T210–G211, and R233. C151 acts as the Nucleophile in catalysis. N315 provides a ligand contact to NAD(+).

This sequence belongs to the glyceraldehyde-3-phosphate dehydrogenase family. As to quaternary structure, homotetramer.

It is found in the cytoplasm. It carries out the reaction D-glyceraldehyde 3-phosphate + phosphate + NAD(+) = (2R)-3-phospho-glyceroyl phosphate + NADH + H(+). The protein operates within carbohydrate degradation; glycolysis; pyruvate from D-glyceraldehyde 3-phosphate: step 1/5. This chain is Glyceraldehyde-3-phosphate dehydrogenase (GPD), found in Wickerhamomyces ciferrii (strain ATCC 14091 / BCRC 22168 / CBS 111 / JCM 3599 / NBRC 0793 / NRRL Y-1031 F-60-10) (Yeast).